Reading from the N-terminus, the 34-residue chain is Omega/M-ectatotoxin-Et1a subunit B (34 aa).

A disulfide bond links Cys10 and Cys32.

The protein belongs to the ectatomin family. Ectatomin-Et subfamily. In terms of assembly, heterodimer of an A and a B chain; disulfide-linked. Expressed by the venom gland.

It is found in the secreted. Its subcellular location is the target cell membrane. Functionally, algogenic for animals, human and insects. At high concentrations (0.5-1 uM), it acts as a pore-forming protein that forms nonselective cation channels both in cell and artificial membranes. It is weakly selective for cation over anions channel conductance is identical in both directions. At lower concentrations (1-10 nM), this heterodimer inhibits cardiac L-type calcium currents in isolated rat cardiac ventricular myocytes. The sequence is that of Omega/M-ectatotoxin-Et1a subunit B from Ectatomma tuberculatum (Selva ant).